The sequence spans 156 residues: Small ribosomal subunit protein uS7 (156 aa).

Belongs to the universal ribosomal protein uS7 family. In terms of assembly, part of the 30S ribosomal subunit. Contacts proteins S9 and S11.

One of the primary rRNA binding proteins, it binds directly to 16S rRNA where it nucleates assembly of the head domain of the 30S subunit. Is located at the subunit interface close to the decoding center, probably blocks exit of the E-site tRNA. The polypeptide is Small ribosomal subunit protein uS7 (Chelativorans sp. (strain BNC1)).